The sequence spans 307 residues: MRQLFVLDPLSQIRPEKDSTAALMQAAQRAGDDIWSCTPSDLIARGDEPMAVALPVTPDPWIAVGAPERQSLAGFDVIWMRKDPPVDEAYLYATHLLEVAERAGVRVLNRPSALRAWNEKLGALRFSRWMAPTLVAGRVSELMAFAREQGDVVLKPLGGRAGLGVIRVQAEAPGLKALLELVTEQERLPVMAQRFLPDVTEGDKRILLVDGDPLGAVNRRPSEGEFRSNLAVGGQAEATELSEPERQICAALAPALRAEGLFFVGIDVIGGMLSEINVTSPTGVREVERLMQEPLADQTIERLRSLV.

An ATP-grasp domain is found at 120 to 304 (KLGALRFSRW…LADQTIERLR (185 aa)). 146–202 (AREQGDVVLKPLGGRAGLGVIRVQAEAPGLKALLELVTEQERLPVMAQRFLPDVTEG) contributes to the ATP binding site. Mg(2+) contacts are provided by E275 and N277.

The protein belongs to the prokaryotic GSH synthase family. It depends on Mg(2+) as a cofactor. Requires Mn(2+) as cofactor.

It catalyses the reaction gamma-L-glutamyl-L-cysteine + glycine + ATP = glutathione + ADP + phosphate + H(+). The protein operates within sulfur metabolism; glutathione biosynthesis; glutathione from L-cysteine and L-glutamate: step 2/2. The sequence is that of Glutathione synthetase from Parasynechococcus marenigrum (strain WH8102).